Here is a 66-residue protein sequence, read N- to C-terminus: Large ribosomal subunit protein bL31 (66 aa).

Zn(2+)-binding residues include Cys16, Cys18, Cys36, and Cys39.

This sequence belongs to the bacterial ribosomal protein bL31 family. Type A subfamily. As to quaternary structure, part of the 50S ribosomal subunit. Zn(2+) serves as cofactor.

Binds the 23S rRNA. This Leptospira biflexa serovar Patoc (strain Patoc 1 / Ames) protein is Large ribosomal subunit protein bL31.